Reading from the N-terminus, the 190-residue chain is Xanthine phosphoribosyltransferase (190 aa).

Residues Leu-20 and Asn-27 each contribute to the xanthine site. Ala-128–Ala-132 contributes to the 5-phospho-alpha-D-ribose 1-diphosphate binding site. Residue Lys-156 participates in xanthine binding.

Belongs to the purine/pyrimidine phosphoribosyltransferase family. Xpt subfamily. Homodimer.

It is found in the cytoplasm. It catalyses the reaction XMP + diphosphate = xanthine + 5-phospho-alpha-D-ribose 1-diphosphate. It functions in the pathway purine metabolism; XMP biosynthesis via salvage pathway; XMP from xanthine: step 1/1. Its function is as follows. Converts the preformed base xanthine, a product of nucleic acid breakdown, to xanthosine 5'-monophosphate (XMP), so it can be reused for RNA or DNA synthesis. The protein is Xanthine phosphoribosyltransferase of Pseudomonas fluorescens (strain SBW25).